The chain runs to 620 residues: Chaperone protein HscA homolog (620 aa).

It belongs to the heat shock protein 70 family.

In terms of biological role, chaperone involved in the maturation of iron-sulfur cluster-containing proteins. Has a low intrinsic ATPase activity which is markedly stimulated by HscB. In Shewanella sp. (strain MR-4), this protein is Chaperone protein HscA homolog.